We begin with the raw amino-acid sequence, 324 residues long: Carbamate kinase (324 aa).

This sequence belongs to the carbamate kinase family.

Its subcellular location is the cytoplasm. The enzyme catalyses hydrogencarbonate + NH4(+) + ATP = carbamoyl phosphate + ADP + H2O + H(+). The protein operates within amino-acid degradation; L-arginine degradation via ADI pathway. The sequence is that of Carbamate kinase from Rhizobium meliloti (strain 1021) (Ensifer meliloti).